A 491-amino-acid chain; its full sequence is Ketol-acid reductoisomerase (NADP(+)) (491 aa).

In terms of domain architecture, KARI N-terminal Rossmann spans 15–208; it reads AQLGKCRFMG…GGHRAGVLES (194 aa). NADP(+) contacts are provided by residues 45 to 48, Arg-68, Arg-76, Ser-78, and 108 to 110; these read CGAQ and DKQ. His-132 is an active-site residue. Position 158 (Gly-158) interacts with NADP(+). 2 KARI C-terminal knotted domains span residues 209 to 344 and 345 to 484; these read SFVA…TAPQ and YEGK…MTDM. Positions 217, 221, 389, and 393 each coordinate Mg(2+). Substrate is bound at residue Ser-414.

Belongs to the ketol-acid reductoisomerase family. Requires Mg(2+) as cofactor.

It carries out the reaction (2R)-2,3-dihydroxy-3-methylbutanoate + NADP(+) = (2S)-2-acetolactate + NADPH + H(+). It catalyses the reaction (2R,3R)-2,3-dihydroxy-3-methylpentanoate + NADP(+) = (S)-2-ethyl-2-hydroxy-3-oxobutanoate + NADPH + H(+). It participates in amino-acid biosynthesis; L-isoleucine biosynthesis; L-isoleucine from 2-oxobutanoate: step 2/4. Its pathway is amino-acid biosynthesis; L-valine biosynthesis; L-valine from pyruvate: step 2/4. Involved in the biosynthesis of branched-chain amino acids (BCAA). Catalyzes an alkyl-migration followed by a ketol-acid reduction of (S)-2-acetolactate (S2AL) to yield (R)-2,3-dihydroxy-isovalerate. In the isomerase reaction, S2AL is rearranged via a Mg-dependent methyl migration to produce 3-hydroxy-3-methyl-2-ketobutyrate (HMKB). In the reductase reaction, this 2-ketoacid undergoes a metal-dependent reduction by NADPH to yield (R)-2,3-dihydroxy-isovalerate. The chain is Ketol-acid reductoisomerase (NADP(+)) from Shigella dysenteriae serotype 1 (strain Sd197).